We begin with the raw amino-acid sequence, 883 residues long: Alanine--tRNA ligase (883 aa).

Zn(2+) contacts are provided by H563, H567, C677, and H681.

The protein belongs to the class-II aminoacyl-tRNA synthetase family. The cofactor is Zn(2+).

It localises to the cytoplasm. The catalysed reaction is tRNA(Ala) + L-alanine + ATP = L-alanyl-tRNA(Ala) + AMP + diphosphate. Functionally, catalyzes the attachment of alanine to tRNA(Ala) in a two-step reaction: alanine is first activated by ATP to form Ala-AMP and then transferred to the acceptor end of tRNA(Ala). Also edits incorrectly charged Ser-tRNA(Ala) and Gly-tRNA(Ala) via its editing domain. The chain is Alanine--tRNA ligase from Cereibacter sphaeroides (strain ATCC 17025 / ATH 2.4.3) (Rhodobacter sphaeroides).